Reading from the N-terminus, the 66-residue chain is Large ribosomal subunit protein bL33c (66 aa).

Belongs to the bacterial ribosomal protein bL33 family.

The protein localises to the plastid. The protein resides in the chloroplast. In Drimys granadensis, this protein is Large ribosomal subunit protein bL33c.